Here is a 104-residue protein sequence, read N- to C-terminus: Large ribosomal subunit protein eL42 (104 aa).

The segment at 22–56 (KVSQAKKSKDNPRAQGNRRYARKQRGYGGQTKPIL) is disordered.

This sequence belongs to the eukaryotic ribosomal protein eL42 family.

In Encephalitozoon cuniculi (strain GB-M1) (Microsporidian parasite), this protein is Large ribosomal subunit protein eL42 (RPL44).